Consider the following 117-residue polypeptide: MEIGVDIVEIARIRSSYDRFGEAFMKKILTSAEMAQCLSKPDPVASLAGRFAAKEAVSKALGTGIAKGLTWHSIEVLNDETGKPCVSVYAPSFSGRVSISISHDRYSAVAMALFEPR.

Asp6 and Glu55 together coordinate Mg(2+).

Belongs to the P-Pant transferase superfamily. AcpS family. Mg(2+) is required as a cofactor.

It localises to the cytoplasm. It carries out the reaction apo-[ACP] + CoA = holo-[ACP] + adenosine 3',5'-bisphosphate + H(+). Transfers the 4'-phosphopantetheine moiety from coenzyme A to a Ser of acyl-carrier-protein. The polypeptide is Holo-[acyl-carrier-protein] synthase (Chlorobaculum tepidum (strain ATCC 49652 / DSM 12025 / NBRC 103806 / TLS) (Chlorobium tepidum)).